The primary structure comprises 195 residues: Interferon tau-1 (195 aa).

Positions 1-23 (MAFVLSLLMALVLVSYGPGRSLG) are cleaved as a signal peptide. 2 disulfide bridges follow: Cys-24–Cys-122 and Cys-52–Cys-162. Residue Asn-101 is glycosylated (N-linked (GlcNAc...) asparagine).

The protein belongs to the alpha/beta interferon family. IFN-alphaII subfamily. Constitutively and exclusively expressed in the mononuclear cells of the extraembryonic trophectoderm.

The protein localises to the secreted. Its function is as follows. Paracrine hormone primarily responsible for maternal recognition of pregnancy. Interacts with endometrial receptors, probably type I interferon receptors, and blocks estrogen receptor expression, preventing the estrogen-induced increase in oxytocin receptor expression in the endometrium. This results in the suppression of the pulsatile endometrial release of the luteolytic hormone prostaglandin F2-alpha, hindering the regression of the corpus luteum (luteolysis) and therefore a return to ovarian cyclicity. This, and a possible direct effect of IFN-tau on prostaglandin synthesis, leads in turn to continued ovarian progesterone secretion, which stimulates the secretion by the endometrium of the nutrients required for the growth of the conceptus. In summary, displays particularly high antiviral and antiproliferative potency concurrently with particular weak cytotoxicity, high antiluteolytic activity and immunomodulatory properties. In contrast with other IFNs, IFN-tau is not virally inducible. The sequence is that of Interferon tau-1 (IFNT1) from Bos taurus (Bovine).